The chain runs to 339 residues: Undecaprenyl-phosphate 4-deoxy-4-formamido-L-arabinose transferase (339 aa).

A run of 2 helical transmembrane segments spans residues 235–255 (LSII…MLIV) and 270–290 (FVLF…MGLL).

This sequence belongs to the glycosyltransferase 2 family.

Its subcellular location is the cell inner membrane. It catalyses the reaction UDP-4-deoxy-4-formamido-beta-L-arabinose + di-trans,octa-cis-undecaprenyl phosphate = 4-deoxy-4-formamido-alpha-L-arabinopyranosyl di-trans,octa-cis-undecaprenyl phosphate + UDP. It participates in glycolipid biosynthesis; 4-amino-4-deoxy-alpha-L-arabinose undecaprenyl phosphate biosynthesis; 4-amino-4-deoxy-alpha-L-arabinose undecaprenyl phosphate from UDP-4-deoxy-4-formamido-beta-L-arabinose and undecaprenyl phosphate: step 1/2. The protein operates within bacterial outer membrane biogenesis; lipopolysaccharide biosynthesis. Functionally, catalyzes the transfer of 4-deoxy-4-formamido-L-arabinose from UDP to undecaprenyl phosphate. The modified arabinose is attached to lipid A and is required for resistance to polymyxin and cationic antimicrobial peptides. The sequence is that of Undecaprenyl-phosphate 4-deoxy-4-formamido-L-arabinose transferase from Pseudomonas fluorescens (strain ATCC BAA-477 / NRRL B-23932 / Pf-5).